A 334-amino-acid chain; its full sequence is D-aspartate oxidase 2 (334 aa).

FAD contacts are provided by Asp38, Lys39, Ser46, Gly310, and Thr315.

Belongs to the DAMOX/DASOX family. FAD serves as cofactor. As to expression, expressed in the intestinal cells, pharyngeal muscles, and body wall muscles in adult hermaphrodites.

The protein resides in the cytoplasm. The catalysed reaction is D-aspartate + O2 + H2O = oxaloacetate + H2O2 + NH4(+). It carries out the reaction D-glutamate + O2 + H2O = H2O2 + 2-oxoglutarate + NH4(+). Its activity is regulated as follows. Inhibited by thiolactomycin. Functionally, selectively catalyzes the oxidative deamination of acidic amino acids. May play a role in the egg-laying events and early development of the worm, in addition to quality control of the germ cells. The chain is D-aspartate oxidase 2 (ddo-2) from Caenorhabditis elegans.